The sequence spans 315 residues: Putative S-adenosyl-L-methionine-dependent methyltransferase MAV_4557 (315 aa).

S-adenosyl-L-methionine contacts are provided by residues Asp-134 and 163 to 164 (DL).

Belongs to the UPF0677 family.

Its function is as follows. Exhibits S-adenosyl-L-methionine-dependent methyltransferase activity. This chain is Putative S-adenosyl-L-methionine-dependent methyltransferase MAV_4557, found in Mycobacterium avium (strain 104).